Consider the following 208-residue polypeptide: Thymidylate kinase (208 aa).

9-16 is an ATP binding site; that stretch reads GGEGCGKS.

Belongs to the thymidylate kinase family.

The catalysed reaction is dTMP + ATP = dTDP + ADP. In terms of biological role, phosphorylation of dTMP to form dTDP in both de novo and salvage pathways of dTTP synthesis. The chain is Thymidylate kinase from Dehalococcoides mccartyi (strain ATCC BAA-2100 / JCM 16839 / KCTC 5957 / BAV1).